The following is a 191-amino-acid chain: Cell division protein SepF (191 aa).

Residues 157–178 (YLNESPAQPVQTTTSFGRTATP) show a composition bias toward polar residues. The segment at 157-191 (YLNESPAQPVQTTTSFGRTATPTPAWGTDSRYAAQ) is disordered.

Belongs to the SepF family. As to quaternary structure, homodimer. Interacts with FtsZ.

The protein localises to the cytoplasm. Its function is as follows. Cell division protein that is part of the divisome complex and is recruited early to the Z-ring. Probably stimulates Z-ring formation, perhaps through the cross-linking of FtsZ protofilaments. Its function overlaps with FtsA. The chain is Cell division protein SepF from Synechococcus elongatus (strain ATCC 33912 / PCC 7942 / FACHB-805) (Anacystis nidulans R2).